Here is a 581-residue protein sequence, read N- to C-terminus: Nicotinic acid-CoA ligase pyr1 (581 aa).

Residue 204 to 215 (MFLTSGTSGLPK) participates in AMP binding. The interval 477 to 555 (EIEGILLKDP…DEIPRTGIGK (79 aa)) is AMP-binding.

The protein belongs to the ATP-dependent AMP-binding enzyme family.

It catalyses the reaction nicotinate + ATP + CoA = nicotinyl-CoA + AMP + diphosphate. It functions in the pathway secondary metabolite biosynthesis; terpenoid biosynthesis. Nicotinic acid-CoA ligase; part of the gene cluster that mediates the biosynthesis of pyripyropene A, a specific human acyl-coenzyme A:cholesterol acyltransferase 2 inhibitor. The first step of the pathway is the synthesis of nicotinyl-CoA from nicotinic acid by the nicotinic acid-CoA ligase pyr1. Nicotinyl-CoA is then a substrate of polyketide synthase pyr2 to produce 4-hydroxy-6-(3-pyridinyl)-2H-pyran-2-one (HPPO) which is further prenylated by the polyprenyl transferase pyr6 to yield farnesyl-HPPO. The next steps consist of an epoxidation of farnesyl-HPPO to epoxyfarnesyl-HPPO by FAD-dependent monooxygenase pyr5 and a cyclization of the terpenoid portion by the terpene cyclase pyr4 to yield deacetyl-pyripyropene E. The 2 cytochrome P450 monooxygenases pyr3 and pyr9, and the 2 acetyltransferases pyr7 and pyr8 are involved in the conversion of deacetyl-pyripyropene E into pyripyropene A through several cycles of oxidation and acetylation steps. Pyr7 acetylates deacetyl-pyripyropene E to pyripyropene E which is oxidized to 11-deacetyl-pyripyropene O by pyr3, which is in turn acetylated into pyripyropene O by pyr8. Pyripyropene O is then oxidized to deacetyl-pyripyropene A by pyr9. Deacetyl-pyripyropene A is finally acetylated to pyripyropene A by pyr8. The protein is Nicotinic acid-CoA ligase pyr1 of Aspergillus fumigatus (strain ATCC MYA-4609 / CBS 101355 / FGSC A1100 / Af293) (Neosartorya fumigata).